A 94-amino-acid polypeptide reads, in one-letter code: Large ribosomal subunit protein uL24c (94 aa).

This sequence belongs to the universal ribosomal protein uL24 family. Part of the 50S ribosomal subunit.

The protein resides in the plastid. It is found in the chloroplast. In terms of biological role, one of two assembly initiator proteins, it binds directly to the 5'-end of the 23S rRNA, where it nucleates assembly of the 50S subunit. This chain is Large ribosomal subunit protein uL24c (rpl24), found in Cyanidium caldarium (Red alga).